Reading from the N-terminus, the 693-residue chain is Putative tyrosinase-like protein tyr-3 (693 aa).

Positions 1-18 are cleaved as a signal peptide; it reads MIRYIILLVYFLIFEVNS. Cu cation-binding residues include H142, H152, H161, H281, H285, and H308. ShKT domains lie at 472–506, 516–550, 591–625, and 634–667; these read CFNE…CRQC, CSDR…CQKC, CYNE…CGVC, and CADY…CNTC. 12 cysteine pairs are disulfide-bonded: C472-C506, C479-C499, C488-C503, C516-C550, C523-C543, C532-C547, C591-C625, C598-C618, C607-C622, C634-C667, C641-C660, and C650-C664.

Belongs to the tyrosinase family. The cofactor is Cu(2+).

In Caenorhabditis elegans, this protein is Putative tyrosinase-like protein tyr-3 (tyr-3).